The chain runs to 601 residues: Elongation factor 4 (601 aa).

One can recognise a tr-type G domain in the interval 6–188 (SRTRNFSIIA…DIVKNVPPPK (183 aa)). GTP is bound by residues 18–23 (DHGKST) and 135–138 (NKID).

Belongs to the TRAFAC class translation factor GTPase superfamily. Classic translation factor GTPase family. LepA subfamily.

It is found in the cell membrane. It carries out the reaction GTP + H2O = GDP + phosphate + H(+). Functionally, required for accurate and efficient protein synthesis under certain stress conditions. May act as a fidelity factor of the translation reaction, by catalyzing a one-codon backward translocation of tRNAs on improperly translocated ribosomes. Back-translocation proceeds from a post-translocation (POST) complex to a pre-translocation (PRE) complex, thus giving elongation factor G a second chance to translocate the tRNAs correctly. Binds to ribosomes in a GTP-dependent manner. The protein is Elongation factor 4 of Clostridioides difficile (strain 630) (Peptoclostridium difficile).